Reading from the N-terminus, the 663-residue chain is Rho GTPase-activating protein 18 (663 aa).

Disordered stretches follow at residues 14–73 and 85–106; these read AYHP…DESM and RSNE…DEGE. The span at 27–37 shows a compositional bias: basic and acidic residues; sequence SHVKGGDEATS. Positions 38-51 are enriched in polar residues; it reads SRRYGQYTINQEGS. Serine 65 and serine 68 each carry phosphoserine. A compositionally biased stretch (basic and acidic residues) spans 85–102; sequence RSNENRQEGQEAIVVKEP. The residue at position 156 (threonine 156) is a Phosphothreonine. Disordered regions lie at residues 173–228 and 245–277; these read FAQQ…PASE and KEFS…TRIG. Composition is skewed to basic and acidic residues over residues 178–205 and 212–222; these read EAQE…KDDQ and DSKEQISRVPE. Phosphoserine is present on residues serine 260 and serine 263. The 200-residue stretch at 324–523 folds into the Rho-GAP domain; that stretch reads IPLTILLEQD…LLIRYQKILW (200 aa). The residue at position 610 (serine 610) is a Phosphoserine.

As to quaternary structure, interacts with MPHOSPH6. Widely expressed: expressed in most organs, except small intestine.

It localises to the cytoplasm. Functionally, rho GTPase activating protein that suppresses F-actin polymerization by inhibiting Rho. Rho GTPase activating proteins act by converting Rho-type GTPases to an inactive GDP-bound state. Plays a key role in tissue tension and 3D tissue shape by regulating cortical actomyosin network formation. Acts downstream of YAP1 and inhibits actin polymerization, which in turn reduces nuclear localization of YAP1. Regulates cell shape, spreading, and migration. This Mus musculus (Mouse) protein is Rho GTPase-activating protein 18.